A 307-amino-acid chain; its full sequence is Low-salt glycan biosynthesis hexosyltransferase Agl10 (307 aa).

This sequence belongs to the glycosyltransferase 2 family.

The protein operates within protein modification; protein glycosylation. It participates in cell surface structure biogenesis; S-layer biogenesis. Hexosyltransferase involved in N-glycan biosynthetic pathway that takes place under low-salt conditions (1.75 M instead of 3.4 M). Participates in the formation of the tetrasaccharide present at 'Asn-532' of S-layer glycoprotein Csg, consisting of a sulfated hexose, 2 hexoses and rhamnose. Involved in the addition of final rhamnose (sugar 4) of the tetrasaccharide on the dolichol phosphate carrier. The chain is Low-salt glycan biosynthesis hexosyltransferase Agl10 (agl10) from Haloferax volcanii (strain ATCC 29605 / DSM 3757 / JCM 8879 / NBRC 14742 / NCIMB 2012 / VKM B-1768 / DS2) (Halobacterium volcanii).